A 1406-amino-acid chain; its full sequence is Receptor-type tyrosine-protein phosphatase eta (1406 aa).

Residues 1-24 (MRRLPLLPPCPLLLLLLLPAEVRC) form the signal peptide. Residues 25 to 1044 (TTACTDDCSL…LPQDPGVIAG (1020 aa)) lie on the Extracellular side of the membrane. Asn-36, Asn-52, Asn-97, Asn-103, Asn-118, Asn-124, Asn-186, Asn-192, Asn-243, Asn-275, Asn-281, Asn-296, Asn-302, Asn-331, Asn-332, Asn-364, Asn-385, Asn-391, Asn-453, Asn-459, Asn-484, Asn-500, Asn-510, Asn-547, Asn-568, Asn-630, Asn-636, Asn-651, Asn-657, Asn-719, Asn-745, Asn-750, Asn-766, Asn-776, Asn-804, and Asn-828 each carry an N-linked (GlcNAc...) asparagine glycan. The interval 39-72 (EEMGTSSNDELSVNATSGNRRLSEDVSLPGRAMS) is disordered. The span at 41–58 (MGTSSNDELSVNATSGNR) shows a compositional bias: polar residues. Fibronectin type-III domains lie at 82-170 (AVLD…TKPS), 171-259 (PVLD…TKPS), 260-343 (PVLD…SLNL), 346-437 (KPSP…TKPS), 438-523 (PVLD…SLYT), 524-614 (KPTP…TKPR), 615-703 (AVLH…TKPS), 704-793 (MVLN…VPSS), 794-888 (VNAF…TDPP), and 887-979 (PPVP…IVDV). Asn-1010 carries N-linked (GlcNAc...) asparagine glycosylation. A helical transmembrane segment spans residues 1045 to 1065 (AVIGCLLAILAVVAIGGYIFW). Residues 1066-1406 (RRRRKDKRNT…AFGKANGYHA (341 aa)) are Cytoplasmic-facing. Residues 1110–1367 (FAEEYEELKS…VFLNQCVMDI (258 aa)) enclose the Tyrosine-protein phosphatase domain. Residues Asp-1274, 1308 to 1314 (CSAGVGR), and Gln-1352 contribute to the substrate site. Catalysis depends on Cys-1308, which acts as the Phosphocysteine intermediate.

Belongs to the protein-tyrosine phosphatase family. Receptor class 3 subfamily. In terms of tissue distribution, found on the apical surfaces of retinal Mueller cells, renal tubule cells and intestinal brush border cells.

It is found in the cell membrane. The protein localises to the cell projection. Its subcellular location is the ruffle membrane. The protein resides in the cell junction. The enzyme catalyses O-phospho-L-tyrosyl-[protein] + H2O = L-tyrosyl-[protein] + phosphate. In terms of biological role, tyrosine phosphatase which dephosphorylates or contributes to the dephosphorylation of several substrates. Plays a role in cell adhesion, migration, proliferation and differentiation. Has a role in megakaryocytes and platelet formation. May influence the potential of nonsensory supporting cells to either proliferate or differentiate into hair cells. This is Receptor-type tyrosine-protein phosphatase eta (PTPRJ) from Gallus gallus (Chicken).